The following is a 206-amino-acid chain: MTFLTRYEELRAIKQEFAARDWFPGTSGNLAIRTNSSPTEFLVTASGKDKRQDTPDDFVHVDATGQLIGEQNGRPSAETLLHVEVFNRTTAGCSLHVHTVDNNVISELYGDRGEIRFRSQEIIKALGRWEEDAEVIVPIITNHADIPTLAADFAKHIRTESGAVLIRNHGITVWAPTAFEAKKQLEAFEFLFSYTLKLQACRQAIY.

2 residues coordinate Zn(2+): H96 and H98.

Belongs to the aldolase class II family. MtnB subfamily. Zn(2+) is required as a cofactor.

It catalyses the reaction 5-(methylsulfanyl)-D-ribulose 1-phosphate = 5-methylsulfanyl-2,3-dioxopentyl phosphate + H2O. Its pathway is amino-acid biosynthesis; L-methionine biosynthesis via salvage pathway; L-methionine from S-methyl-5-thio-alpha-D-ribose 1-phosphate: step 2/6. Functionally, catalyzes the dehydration of methylthioribulose-1-phosphate (MTRu-1-P) into 2,3-diketo-5-methylthiopentyl-1-phosphate (DK-MTP-1-P). This chain is Methylthioribulose-1-phosphate dehydratase, found in Exiguobacterium sibiricum (strain DSM 17290 / CCUG 55495 / CIP 109462 / JCM 13490 / 255-15).